The sequence spans 502 residues: Alpha-ketoglutarate-dependent dioxygenase FTO (502 aa).

The segment at 32–324 (TPKDDEFYQQ…SSTHRVAECS (293 aa)) is fe2OG dioxygenase domain. Positions 96 and 108 each coordinate substrate. Asparagine 202 provides a ligand contact to 2-oxoglutarate. Positions 210 to 221 (PYLKEEPYFGMG) are loop L1; predicted to block binding of double-stranded DNA or RNA. An N6-acetyllysine modification is found at lysine 213. Fe cation contacts are provided by histidine 228 and aspartate 230. Position 228 to 231 (228 to 231 (HHDE)) interacts with substrate. Tyrosine 292 is a 2-oxoglutarate binding site. Position 304 (histidine 304) interacts with Fe cation. 2-oxoglutarate-binding positions include 313 to 315 (RFS), threonine 317, and arginine 319.

The protein belongs to the fto family. Monomer. May also exist as homodimer. Fe(2+) serves as cofactor. Ubiquitous. Detected in brain, brain cortex, hypothalamus, cerebellum, liver, pancreas, heart, kidney, white adipose tissue and skeletal muscle. Most abundant in the brain, particularly in hypothalamic nuclei governing energy balance.

It localises to the nucleus. Its subcellular location is the nucleus speckle. The protein resides in the cytoplasm. The catalysed reaction is a 5'-end (N(7)-methyl 5'-triphosphoguanosine)-(N(6),2'-O-dimethyladenosine) in mRNA + 2-oxoglutarate + O2 = a 5'-end (N(7)-methyl 5'-triphosphoguanosine)-(2'-O-methyladenosine) in mRNA + formaldehyde + succinate + CO2. The enzyme catalyses an N(6)-methyladenosine in mRNA + 2-oxoglutarate + O2 = an adenosine in mRNA + formaldehyde + succinate + CO2. It carries out the reaction N(6)-methyladenosine in U6 snRNA + 2-oxoglutarate + O2 = adenosine in U6 snRNA + formaldehyde + succinate + CO2. It catalyses the reaction a 5'-end (N(7)-methyl 5'-triphosphoguanosine)-(N(6),2'-O-dimethyladenosine) in U6 snRNA + 2-oxoglutarate + O2 = a 5'-end (N(7)-methyl 5'-triphosphoguanosine)-(2'-O-methyladenosine) in U6 snRNA + formaldehyde + succinate + CO2. The catalysed reaction is an N(1)-methyladenosine in tRNA + 2-oxoglutarate + O2 = an adenosine in tRNA + formaldehyde + succinate + CO2. Activated by ascorbate. Inhibited by N-oxalylglycine, fumarate and succinate. Functionally, RNA demethylase that mediates oxidative demethylation of different RNA species, such as mRNAs, tRNAs and snRNAs, and acts as a regulator of fat mass, adipogenesis and energy homeostasis. Specifically demethylates N(6)-methyladenosine (m6A) RNA, the most prevalent internal modification of messenger RNA (mRNA) in higher eukaryotes. M6A demethylation by FTO affects mRNA expression and stability. Also able to demethylate m6A in U6 small nuclear RNA (snRNA). Mediates demethylation of N(6),2'-O-dimethyladenosine cap (m6A(m)), by demethylating the N(6)-methyladenosine at the second transcribed position of mRNAs and U6 snRNA. Demethylation of m6A(m) in the 5'-cap by FTO affects mRNA stability by promoting susceptibility to decapping. Also acts as a tRNA demethylase by removing N(1)-methyladenine from various tRNAs. Has no activity towards 1-methylguanine. Has no detectable activity towards double-stranded DNA. Also able to repair alkylated DNA and RNA by oxidative demethylation: demethylates single-stranded RNA containing 3-methyluracil, single-stranded DNA containing 3-methylthymine and has low demethylase activity towards single-stranded DNA containing 1-methyladenine or 3-methylcytosine. Ability to repair alkylated DNA and RNA is however unsure in vivo. Involved in the regulation of fat mass, adipogenesis and body weight, thereby contributing to the regulation of body size and body fat accumulation. Involved in the regulation of thermogenesis and the control of adipocyte differentiation into brown or white fat cells. Regulates activity of the dopaminergic midbrain circuitry via its ability to demethylate m6A in mRNAs. The sequence is that of Alpha-ketoglutarate-dependent dioxygenase FTO from Mus musculus (Mouse).